The primary structure comprises 486 residues: Regulatory protein ViaA (486 aa).

Belongs to the ViaA family. In terms of assembly, homodimer. Interacts with RavA.

Its subcellular location is the cytoplasm. In terms of biological role, component of the RavA-ViaA chaperone complex, which may act on the membrane to optimize the function of some of the respiratory chains. ViaA stimulates the ATPase activity of RavA. The sequence is that of Regulatory protein ViaA from Erwinia tasmaniensis (strain DSM 17950 / CFBP 7177 / CIP 109463 / NCPPB 4357 / Et1/99).